A 214-amino-acid polypeptide reads, in one-letter code: Probable nicotinate-nucleotide adenylyltransferase (214 aa).

The protein belongs to the NadD family.

The enzyme catalyses nicotinate beta-D-ribonucleotide + ATP + H(+) = deamido-NAD(+) + diphosphate. Its pathway is cofactor biosynthesis; NAD(+) biosynthesis; deamido-NAD(+) from nicotinate D-ribonucleotide: step 1/1. Catalyzes the reversible adenylation of nicotinate mononucleotide (NaMN) to nicotinic acid adenine dinucleotide (NaAD). This is Probable nicotinate-nucleotide adenylyltransferase from Mycobacterium bovis (strain ATCC BAA-935 / AF2122/97).